Here is a 329-residue protein sequence, read N- to C-terminus: 36 kDa antigen (329 aa).

Residues 11–31 (AILTGGGALLLGLIVLFYLAY) traverse the membrane as a helical segment.

Belongs to the membrane fusion protein (MFP) (TC 8.A.1) family.

The protein resides in the membrane. This is 36 kDa antigen from Helicobacter pylori (strain ATCC 700392 / 26695) (Campylobacter pylori).